Here is a 1228-residue protein sequence, read N- to C-terminus: DNA repair protein rad5 (1228 aa).

Disordered stretches follow at residues 1 to 96 (MDRH…GTLT), 194 to 242 (PPVR…VLPS), 280 to 302 (QPPT…PRVS), and 445 to 474 (KAMD…QELE). The segment covering 34-43 (PSSSPQFSAP) has biased composition (low complexity). The segment covering 70–83 (HNDDDDDDDDDDDE) has biased composition (acidic residues). The span at 211-237 (PKKSSTSQARSRSHAQAQPQPQSNTPT) shows a compositional bias: polar residues. Residues 445 to 454 (KAMDKAKAGD) show a composition bias toward basic and acidic residues. Residues 465–474 (EEAEEGQELE) are compositionally biased toward acidic residues. Positions 574–784 (PKQEQHCLGG…FSLVRFLRVE (211 aa)) constitute a Helicase ATP-binding domain. Residue 587–594 (DEMGLGKT) participates in ATP binding. Residues 735-738 (DEAH) carry the DEAH box motif. The RING-type zinc finger occupies 967 to 1012 (CPICAEEPMIDQAVTGCWHSACKKCLLDYIKHQTDRNEVPRCFQCR). Positions 1060 to 1216 (ALISHLRTLR…MMSDEEKKMQ (157 aa)) constitute a Helicase C-terminal domain.

It belongs to the SNF2/RAD54 helicase family.

It localises to the cytoplasm. The protein resides in the nucleus. Probable helicase, member of the UBC2/RAD6 epistasis group. Functions with DNA repair protein uvs-2/rad18 in error-free postreplication DNA repair. Involved in the maintenance of wild-type rates of instability of simple repetitive sequences such as poly(GT) repeats. Seems to be involved in maintaining a balance which acts in favor of error-prone non-homologous joining during DNA double-strand breaks repairs. The chain is DNA repair protein rad5 (mus-41) from Neurospora crassa (strain ATCC 24698 / 74-OR23-1A / CBS 708.71 / DSM 1257 / FGSC 987).